Here is a 360-residue protein sequence, read N- to C-terminus: Ribosomal RNA large subunit methyltransferase M (360 aa).

Residues Ser-192, 225–228 (APGG), Asp-244, Asp-264, and Asp-280 contribute to the S-adenosyl-L-methionine site. The active-site Proton acceptor is Lys-309.

Belongs to the class I-like SAM-binding methyltransferase superfamily. RNA methyltransferase RlmE family. RlmM subfamily. In terms of assembly, monomer.

It localises to the cytoplasm. It catalyses the reaction cytidine(2498) in 23S rRNA + S-adenosyl-L-methionine = 2'-O-methylcytidine(2498) in 23S rRNA + S-adenosyl-L-homocysteine + H(+). In terms of biological role, catalyzes the 2'-O-methylation at nucleotide C2498 in 23S rRNA. The sequence is that of Ribosomal RNA large subunit methyltransferase M from Alkalilimnicola ehrlichii (strain ATCC BAA-1101 / DSM 17681 / MLHE-1).